The primary structure comprises 86 residues: Small ribosomal subunit protein bS18 (86 aa).

It belongs to the bacterial ribosomal protein bS18 family. In terms of assembly, part of the 30S ribosomal subunit. Forms a tight heterodimer with protein bS6.

In terms of biological role, binds as a heterodimer with protein bS6 to the central domain of the 16S rRNA, where it helps stabilize the platform of the 30S subunit. The protein is Small ribosomal subunit protein bS18 of Protochlamydia amoebophila (strain UWE25).